We begin with the raw amino-acid sequence, 122 residues long: Small ribosomal subunit protein uS13 (122 aa).

Positions 92-122 are disordered; it reads HRKQLPVRGQRTHTNARTRKGKAKPIAGKKK.

Belongs to the universal ribosomal protein uS13 family. In terms of assembly, part of the 30S ribosomal subunit. Forms a loose heterodimer with protein S19. Forms two bridges to the 50S subunit in the 70S ribosome.

Functionally, located at the top of the head of the 30S subunit, it contacts several helices of the 16S rRNA. In the 70S ribosome it contacts the 23S rRNA (bridge B1a) and protein L5 of the 50S subunit (bridge B1b), connecting the 2 subunits; these bridges are implicated in subunit movement. Contacts the tRNAs in the A and P-sites. In Methylobacterium radiotolerans (strain ATCC 27329 / DSM 1819 / JCM 2831 / NBRC 15690 / NCIMB 10815 / 0-1), this protein is Small ribosomal subunit protein uS13.